A 308-amino-acid chain; its full sequence is Glutaminase 1 (308 aa).

Residues S64, N116, E161, N168, Y192, Y244, and V262 each contribute to the substrate site.

It belongs to the glutaminase family. Homotetramer.

It catalyses the reaction L-glutamine + H2O = L-glutamate + NH4(+). The sequence is that of Glutaminase 1 from Halalkalibacterium halodurans (strain ATCC BAA-125 / DSM 18197 / FERM 7344 / JCM 9153 / C-125) (Bacillus halodurans).